A 284-amino-acid chain; its full sequence is Bifunctional protein FolD (284 aa).

NADP(+) is bound by residues 165-167 (GRS) and serine 190.

The protein belongs to the tetrahydrofolate dehydrogenase/cyclohydrolase family. Homodimer.

It catalyses the reaction (6R)-5,10-methylene-5,6,7,8-tetrahydrofolate + NADP(+) = (6R)-5,10-methenyltetrahydrofolate + NADPH. The catalysed reaction is (6R)-5,10-methenyltetrahydrofolate + H2O = (6R)-10-formyltetrahydrofolate + H(+). It functions in the pathway one-carbon metabolism; tetrahydrofolate interconversion. Its function is as follows. Catalyzes the oxidation of 5,10-methylenetetrahydrofolate to 5,10-methenyltetrahydrofolate and then the hydrolysis of 5,10-methenyltetrahydrofolate to 10-formyltetrahydrofolate. This Streptococcus pyogenes serotype M28 (strain MGAS6180) protein is Bifunctional protein FolD.